A 91-amino-acid chain; its full sequence is Small ribosomal subunit protein uS19 (91 aa).

It belongs to the universal ribosomal protein uS19 family.

Functionally, protein S19 forms a complex with S13 that binds strongly to the 16S ribosomal RNA. This chain is Small ribosomal subunit protein uS19, found in Bordetella petrii (strain ATCC BAA-461 / DSM 12804 / CCUG 43448).